Consider the following 228-residue polypeptide: Deoxyguanosine kinase (228 aa).

8 to 16 (GPIGAGKSS) contacts ATP. Residues Glu32, Tyr44, and Gln55 each contribute to the substrate site. Residue Asp78 is the Proton acceptor of the active site. The substrate site is built by Arg79, Asp84, and Glu149.

It belongs to the DCK/DGK family. As to quaternary structure, heterodimer of a deoxyadenosine (DAK) and a deoxyguanosine kinase (DGK).

It carries out the reaction 2'-deoxyguanosine + ATP = dGMP + ADP + H(+). DGK/DAK plays an essential role in generating the deoxyribonucleotide precursors, dGTP and dATP, for DNA metabolism. This is Deoxyguanosine kinase from Lactobacillus acidophilus (strain ATCC 700396 / NCK56 / N2 / NCFM).